The chain runs to 307 residues: Mitochondrial glycine transporter YMC1 (307 aa).

3 Solcar repeats span residues 26–106 (VKDL…MKRF), 121–204 (PQYY…LIAN), and 218–305 (PAWK…AMRL). The next 6 helical transmembrane spans lie at 29–49 (LLAG…FDTT), 83–103 (LTPL…NEAM), 118–138 (LSLP…SFLA), 183–203 (TILR…ALIA), 223–243 (CIFG…LDVI), and 277–298 (FFKG…TFAT).

The protein belongs to the mitochondrial carrier (TC 2.A.29) family.

Its subcellular location is the mitochondrion inner membrane. Its function is as follows. Secondary mitochondrial glycine transporter required for the biosynthesis of heme at high glycine concentrations. Imports the precursor glycine into the mitochondrial matrix, where it is condensed with succinyl-CoA to produce 5-aminolevulinate (ALA), the first step of heme biosynthesis. This is Mitochondrial glycine transporter YMC1 from Saccharomyces cerevisiae (strain ATCC 204508 / S288c) (Baker's yeast).